The following is a 352-amino-acid chain: Probable protein phosphatase 2C 42 (352 aa).

A PPM-type phosphatase domain is found at 26-321 (AYASSAMQGY…DNMSVILVRF (296 aa)). Mn(2+) contacts are provided by Asp62, Gly63, Asp267, and Asp312. The segment at 328–352 (RGARAATSSTSTGTVPSRHSKSISL) is disordered. Low complexity predominate over residues 329-341 (GARAATSSTSTGT).

This sequence belongs to the PP2C family. Mg(2+) serves as cofactor. Mn(2+) is required as a cofactor.

It catalyses the reaction O-phospho-L-seryl-[protein] + H2O = L-seryl-[protein] + phosphate. The catalysed reaction is O-phospho-L-threonyl-[protein] + H2O = L-threonyl-[protein] + phosphate. The sequence is that of Probable protein phosphatase 2C 42 from Oryza sativa subsp. japonica (Rice).